Here is a 62-residue protein sequence, read N- to C-terminus: Cryptic Mu-phage protein com (62 aa).

It belongs to the com family.

The chain is Cryptic Mu-phage protein com from Shigella dysenteriae.